The primary structure comprises 585 residues: Dihydroxy-acid dehydratase, mitochondrial (585 aa).

The N-terminal 20 residues, 1 to 20 (MGLLTKVATSRQFSTTRCVA), are a transit peptide targeting the mitochondrion. Cys-70 is a [2Fe-2S] cluster binding site. Asp-102 serves as a coordination point for Mg(2+). Cys-143 serves as a coordination point for [2Fe-2S] cluster. Asp-144 serves as a coordination point for Mg(2+). [2Fe-2S] cluster is bound at residue Cys-221. Position 474 (Glu-474) interacts with Mg(2+). Ser-500 acts as the Proton acceptor in catalysis.

This sequence belongs to the IlvD/Edd family. [2Fe-2S] cluster serves as cofactor. Mg(2+) is required as a cofactor.

It localises to the mitochondrion. It carries out the reaction (2R)-2,3-dihydroxy-3-methylbutanoate = 3-methyl-2-oxobutanoate + H2O. It catalyses the reaction (2R,3R)-2,3-dihydroxy-3-methylpentanoate = (S)-3-methyl-2-oxopentanoate + H2O. It participates in amino-acid biosynthesis; L-isoleucine biosynthesis; L-isoleucine from 2-oxobutanoate: step 3/4. It functions in the pathway amino-acid biosynthesis; L-valine biosynthesis; L-valine from pyruvate: step 3/4. With respect to regulation, catalytic activity is inactivated under iron-limiting conditions. Its function is as follows. Dihydroxyacid dehydratase that catalyzes the third step in the common pathway leading to biosynthesis of branched-chain amino acids. Catalyzes the dehydration of (2R,3R)-2,3-dihydroxy-3-methylpentanoate (2,3-dihydroxy-3-methylvalerate) into 2-oxo-3-methylpentanoate (2-oxo-3-methylvalerate) and of (2R)-2,3-dihydroxy-3-methylbutanoate (2,3-dihydroxyisovalerate) into 2-oxo-3-methylbutanoate (2-oxoisovalerate), the penultimate precursor to L-isoleucine and L-valine, respectively. Required for the synthesis of alpha-isopropylmalate which modulates the activity of LEU3 and subsequently regulates the expression of LEU1. The protein is Dihydroxy-acid dehydratase, mitochondrial of Saccharomyces cerevisiae (strain ATCC 204508 / S288c) (Baker's yeast).